Reading from the N-terminus, the 393-residue chain is Phosphoglycerate kinase (393 aa).

Substrate contacts are provided by residues 21-23 (DFN), arginine 37, 60-63 (HLGR), arginine 119, and arginine 152. ATP-binding positions include lysine 202, glycine 291, glutamate 322, and 348–351 (GGDT).

This sequence belongs to the phosphoglycerate kinase family. As to quaternary structure, monomer.

Its subcellular location is the cytoplasm. The catalysed reaction is (2R)-3-phosphoglycerate + ATP = (2R)-3-phospho-glyceroyl phosphate + ADP. It functions in the pathway carbohydrate degradation; glycolysis; pyruvate from D-glyceraldehyde 3-phosphate: step 2/5. This is Phosphoglycerate kinase from Coprothermobacter proteolyticus (strain ATCC 35245 / DSM 5265 / OCM 4 / BT).